The primary structure comprises 502 residues: Probable cytochrome P450 554A1 (502 aa).

Residues 3–20 (LLLFIFFLILFYYSVKYY) traverse the membrane as a helical segment. Cys448 is a heme binding site.

The protein belongs to the cytochrome P450 family. Requires heme as cofactor.

Its subcellular location is the membrane. The sequence is that of Probable cytochrome P450 554A1 (cyp554A1) from Dictyostelium discoideum (Social amoeba).